Consider the following 83-residue polypeptide: MKTLLLTLLVVTIVCLDLGYTLECHNQQSSQAPTTTGCSGGETNCYKKSWRDHRGYRIERGCGCPSVKKGIEINCCTTDRCNN.

The N-terminal stretch at 1 to 21 (MKTLLLTLLVVTIVCLDLGYT) is a signal peptide. Intrachain disulfides connect C24/C45, C38/C62, C64/C75, and C76/C81.

The protein belongs to the three-finger toxin family. Short-chain subfamily. Type I alpha-neurotoxin sub-subfamily. Expressed by the venom gland.

Its subcellular location is the secreted. In terms of biological role, binds to muscle nicotinic acetylcholine receptor (nAChR) and inhibit acetylcholine from binding to the receptor, thereby impairing neuromuscular transmission. The protein is Alpha-neurotoxin NTX-2 of Naja sputatrix (Malayan spitting cobra).